A 433-amino-acid polypeptide reads, in one-letter code: 5-methylthioadenosine/S-adenosylhomocysteine deaminase (433 aa).

Residues H67 and H69 each coordinate Zn(2+). E96, R148, and H186 together coordinate substrate. H213 contributes to the Zn(2+) binding site. Substrate-binding residues include E216 and D301. D301 serves as a coordination point for Zn(2+).

It belongs to the metallo-dependent hydrolases superfamily. MTA/SAH deaminase family. Zn(2+) is required as a cofactor.

It catalyses the reaction S-adenosyl-L-homocysteine + H2O + H(+) = S-inosyl-L-homocysteine + NH4(+). The catalysed reaction is S-methyl-5'-thioadenosine + H2O + H(+) = S-methyl-5'-thioinosine + NH4(+). In terms of biological role, catalyzes the deamination of 5-methylthioadenosine and S-adenosyl-L-homocysteine into 5-methylthioinosine and S-inosyl-L-homocysteine, respectively. Is also able to deaminate adenosine. This Desulforamulus reducens (strain ATCC BAA-1160 / DSM 100696 / MI-1) (Desulfotomaculum reducens) protein is 5-methylthioadenosine/S-adenosylhomocysteine deaminase.